A 501-amino-acid chain; its full sequence is G protein-activated inward rectifier potassium channel 1 (501 aa).

Positions 1 to 40 (MSALRRKFGDDYQVVTTSSSGSGLQPQGPGQGPQQQLVPK) are disordered. The Cytoplasmic portion of the chain corresponds to 1-80 (MSALRRKFGD…LFTTLVDLKW (80 aa)). Positions 18 to 37 (SSSGSGLQPQGPGQGPQQQL) are enriched in low complexity. Residues 81 to 105 (RWNLFIFILTYTVAWLFMASMWWVI) form a helical membrane-spanning segment. Topologically, residues 106–129 (AYTRGDLNKAHVGNYTPCVANVYN) are extracellular. N-linked (GlcNAc...) asparagine glycosylation is present at N119. The segment at residues 130–141 (FPSAFLFFIETE) is an intramembrane region (helical; Pore-forming). An intramembrane region (pore-forming) is located at residues 142 to 148 (ATIGYGY). The Selectivity filter motif lies at 143-148 (TIGYGY). Over 149–157 (RYITDKCPE) the chain is Extracellular. The chain crosses the membrane as a helical span at residues 158–179 (GIILFLFQSILGSIVDAFLIGC). The Cytoplasmic portion of the chain corresponds to 180-501 (MFIKMSQPKK…LRKMNSDRFT (322 aa)). Residues 182 to 209 (IKMSQPKKRAETLMFSEHAVISMRDGKL) form a polyphosphoinositide (PIP2)-binding region. Phosphoserine is present on residues S385 and S424. Positions 456–467 (TKMLSDPMSQSV) are enriched in polar residues. The interval 456-501 (TKMLSDPMSQSVADLPPKLQKMAGGPTRMEGNLPAKLRKMNSDRFT) is disordered.

Belongs to the inward rectifier-type potassium channel (TC 1.A.2.1) family. KCNJ3 subfamily. In terms of assembly, associates with KCNJ5/GIRK4 or KCNJ6/GIRK2 to form a G-protein activated heteromultimer pore-forming unit. The resulting inward current is much larger. Associates with KCNJ9/GIRK3 to form a G-protein activated heteromultimer pore-forming unit.

The protein localises to the membrane. It catalyses the reaction K(+)(in) = K(+)(out). Its activity is regulated as follows. Heteromultimer composed of KCNJ3/GIRK1 and KCNJ5/GIRK4 is activated by phosphatidylinositol 4,5 biphosphate (PtdIns(4,5)P2). Inward rectifier potassium channels are characterized by a greater tendency to allow potassium to flow into the cell rather than out of it. Their voltage dependence is regulated by the concentration of extracellular potassium; as external potassium is raised, the voltage range of the channel opening shifts to more positive voltages. The inward rectification is mainly due to the blockage of outward current by internal magnesium. This potassium channel is controlled by G proteins. This receptor plays a crucial role in regulating the heartbeat. Forms a functional channel in association with KCNJ9/GIRK3. The protein is G protein-activated inward rectifier potassium channel 1 (Kcnj3) of Rattus norvegicus (Rat).